The chain runs to 496 residues: E3 ubiquitin-protein ligase Hakai (496 aa).

Positions 35–60 (PNKIKPAPRPQRNMNRIPTKPQPGFD) are disordered. The RING-type; degenerate zinc-finger motif lies at 104–144 (CDKCGLPIKIYGRMIPCKHVFCYDCALMHEKKADKLCPGTL). The segment at 157-215 (CNDPVQRIEQCARGSLFMCSIVQGCKRTYLSQRDLQAHINHRHMRASKPTARPQPEPIH) is HYB domain. The C2H2-type zinc-finger motif lies at 173–199 (FMCSIVQGCKRTYLSQRDLQAHINHRH). The segment covering 304–314 (VPIQDDSNSGA) has biased composition (polar residues). The interval 304 to 496 (VPIQDDSNSG…DQARYRPYYQ (193 aa)) is disordered. Composition is skewed to pro residues over residues 350–360 (APPPPPPPPIS), 380–397 (GPPP…PPPG), and 407–430 (MNHP…PPHH). Residues 434-449 (SSMPQFNEDQGTLSPP) are compositionally biased toward polar residues. A compositionally biased stretch (pro residues) spans 464-483 (PRGPPPRMQGPPSQAPMPGP).

The protein belongs to the Hakai family. Homodimer. Interacts with tyrosine-phosphorylated SRC substrates. Component of the WMM complex, a N6-methyltransferase complex composed of a catalytic subcomplex, named MAC, and of an associated subcomplex, named MACOM. Component of the MACOM subcomplex.

Its subcellular location is the nucleus speckle. It is found in the nucleus. The protein resides in the nucleoplasm. The catalysed reaction is S-ubiquitinyl-[E2 ubiquitin-conjugating enzyme]-L-cysteine + [acceptor protein]-L-lysine = [E2 ubiquitin-conjugating enzyme]-L-cysteine + N(6)-ubiquitinyl-[acceptor protein]-L-lysine.. Its pathway is protein modification; protein ubiquitination. Its function is as follows. E3 ubiquitin-protein ligase that mediates ubiquitination of several tyrosine-phosphorylated Src substrates. Associated component of the WMM complex, a complex that mediates N6-methyladenosine (m6A) methylation of RNAs, a modification that plays a role in the efficiency of mRNA splicing and RNA processing. The sequence is that of E3 ubiquitin-protein ligase Hakai from Xenopus laevis (African clawed frog).